The sequence spans 340 residues: Ribonucleoside-diphosphate reductase small subunit (340 aa).

Positions 94, 124, and 127 each coordinate Fe cation. The active site involves tyrosine 131. The helical transmembrane segment at 180–200 (FILMILIEGIFFAASFAAIAY) threads the bilayer. Fe cation contacts are provided by glutamate 187, glutamate 221, and histidine 224.

The protein belongs to the ribonucleoside diphosphate reductase small chain family. In terms of assembly, heterotetramer composed of a homodimer of the large subunit (R1) and a homodimer of the small subunit (R2). Larger multisubunit protein complex are also active, composed of (R1)n(R2)n. Requires Fe cation as cofactor.

It is found in the host membrane. It carries out the reaction a 2'-deoxyribonucleoside 5'-diphosphate + [thioredoxin]-disulfide + H2O = a ribonucleoside 5'-diphosphate + [thioredoxin]-dithiol. In terms of biological role, ribonucleoside-diphosphate reductase holoenzyme provides the precursors necessary for viral DNA synthesis. Allows virus growth in non-dividing cells, as well as reactivation from latency in infected hosts. Catalyzes the biosynthesis of deoxyribonucleotides from the corresponding ribonucleotides. The sequence is that of Ribonucleoside-diphosphate reductase small subunit from Human herpesvirus 1 (strain KOS) (HHV-1).